The following is a 222-amino-acid chain: Probable glutathione-independent glyoxalase hsp3104 (222 aa).

Residues Cys-124, His-125, and Glu-155 contribute to the active site.

The protein belongs to the peptidase C56 family. HSP31-like subfamily.

The protein localises to the cytoplasm. The catalysed reaction is methylglyoxal + H2O = (R)-lactate + H(+). Functionally, catalyzes the conversion of methylglyoxal (MG) to D-lactate in a single glutathione (GSH)-independent step. May play a role in detoxifying endogenously produced glyoxals. Involved in protection against reactive oxygen species (ROS). This is Probable glutathione-independent glyoxalase hsp3104 from Schizosaccharomyces pombe (strain 972 / ATCC 24843) (Fission yeast).